The sequence spans 296 residues: Acetyl-coenzyme A carboxylase carboxyl transferase subunit beta (296 aa).

Residues 25 to 294 (VWTKCTSCEQ…PFVEPELISE (270 aa)) enclose the CoA carboxyltransferase N-terminal domain. Zn(2+)-binding residues include Cys29, Cys32, Cys48, and Cys51. The segment at 29-51 (CTSCEQVLYSEELKRNLYVCPKC) adopts a C4-type zinc-finger fold.

This sequence belongs to the AccD/PCCB family. In terms of assembly, acetyl-CoA carboxylase is a heterohexamer composed of biotin carboxyl carrier protein (AccB), biotin carboxylase (AccC) and two subunits each of ACCase subunit alpha (AccA) and ACCase subunit beta (AccD). Zn(2+) serves as cofactor.

It is found in the cytoplasm. The catalysed reaction is N(6)-carboxybiotinyl-L-lysyl-[protein] + acetyl-CoA = N(6)-biotinyl-L-lysyl-[protein] + malonyl-CoA. Its pathway is lipid metabolism; malonyl-CoA biosynthesis; malonyl-CoA from acetyl-CoA: step 1/1. Component of the acetyl coenzyme A carboxylase (ACC) complex. Biotin carboxylase (BC) catalyzes the carboxylation of biotin on its carrier protein (BCCP) and then the CO(2) group is transferred by the transcarboxylase to acetyl-CoA to form malonyl-CoA. The sequence is that of Acetyl-coenzyme A carboxylase carboxyl transferase subunit beta from Haemophilus influenzae (strain PittEE).